Reading from the N-terminus, the 339-residue chain is Acyl-CoA dehydrogenase FadE28 (339 aa).

Arg-227, Gln-238, His-295, and Gly-299 together coordinate FAD.

This sequence belongs to the acyl-CoA dehydrogenase family. In terms of assembly, heterotetramer composed of FadE28 and FadE29. Requires FAD as cofactor.

The catalysed reaction is 3-oxochol-4-en-22-oyl-CoA + A = 3-oxochola-4,17-dien-22-oyl-CoA + AH2. Its pathway is steroid metabolism; cholesterol degradation. Involved in the third cycle of side chain dehydrogenation in the beta-oxidation of cholesterol catabolism. May play an important role for the initial macrophage invasion, possibly in response to the acidification of phagosome. It contributes partly to the virulence by increasing the efficiency of beta-oxidation. Catalyzes the dehydrogenation of 2'-propanoyl-CoA ester side chains of 3-oxo-4-pregnene-20-carboxyl-CoA (3-OPC-CoA) to yield 3-oxo-4,17-pregnadiene-20-carboxyl-CoA (3-OPDC-CoA). Also able to dehydrogenate steroyl-CoA such as 3-oxo-chol-4-en-24-oyl-CoA (3-OCO-CoA), 1beta-(2'-propanoyl-CoA)-3a-alpha-H-7a-beta-methylhexahydro-4-indanone (indanone-CoA ester), hexahydroindanone and pregenenone. In Mycobacterium tuberculosis (strain ATCC 25618 / H37Rv), this protein is Acyl-CoA dehydrogenase FadE28 (fadE28).